The chain runs to 510 residues: DNA nucleotidylexotransferase (510 aa).

Positions 1–22 (MDPLQAVHLGPRKKRPRQLGTP) are disordered. Residues 11–17 (PRKKRPR) carry the Nuclear localization signal motif. The BRCT domain occupies 27-124 (PYDIRFRDLV…KPVEMMGRHQ (98 aa)). The residue at position 134 (Ser134) is a Phosphoserine. A mediates interaction with DNTTIP2 region spans residues 151-510 (SQYACQRRTT…DYIEPWERNA (360 aa)). Residues 258–262 (VGLKT) form an involved in DNA binding region. A 2'-deoxyribonucleoside 5'-triphosphate contacts are provided by residues 333-338 (GFRRGK) and 342-345 (HDVD). Asp343, Asp345, and Asp434 together coordinate Mg(2+). 449–450 (GW) is an a 2'-deoxyribonucleoside 5'-triphosphate binding site.

The protein belongs to the DNA polymerase type-X family. In terms of assembly, interacts with PRP19 and DNTTIP1. Forms a ternary complex with DNTTIP2 and core histone. Released from this complex by PCNA. Interacts with TRERF1. The cofactor is Mg(2+). As to expression, isoform TDT-L: Expressed in the thymus, and, at lower levels, in the bone marrow. Detected in both cycling and noncycling pro-B and pre-B cells (at protein level). Isoform TDT-S: Expressed in both cycling and noncycling pro-B, but not pre-B, cells (at protein level). Not detected in mature peripheral or germinal center B cells.

The protein localises to the nucleus. Its subcellular location is the cytoplasm. It carries out the reaction DNA(n) + a 2'-deoxyribonucleoside 5'-triphosphate = DNA(n+1) + diphosphate. In terms of biological role, transferase that catalyzes the nontemplated addition of nucleoside triphosphate to coding ends during V(D)J recombination (N addition). Involved in the generation of diversity in the antigen-binding region of immunoglobulin heavy and light chains and T-cell receptors during B- and T-cell development. Does not act on double-stranded DNA with blunt ends. Its function is as follows. 3'-to-5' DNA exonuclease. Involved in the generation of diversity in the antigen-binding region of immunoglobulin heavy and light chains and T-cell receptors during B- and T-cell development. Acts on single-stranded and double-stranded DNA with 3' or 5' extensions, but not on double-stranded DNA with blunt ends. Attenuates not only isoform TDT-S-catalyzed N addition, but also P (palindromic) addition in coding joins. Lacks terminal transferase activity. The protein is DNA nucleotidylexotransferase (Dntt) of Mus musculus (Mouse).